A 207-amino-acid polypeptide reads, in one-letter code: Carbonic anhydrase 2 (207 aa).

Residues Cys-51, Asp-53, His-104, and Cys-107 each coordinate Zn(2+).

This sequence belongs to the beta-class carbonic anhydrase family. Zn(2+) serves as cofactor.

The enzyme catalyses hydrogencarbonate + H(+) = CO2 + H2O. Its function is as follows. Catalyzes the reversible hydration of carbon dioxide to form bicarbonate. This is Carbonic anhydrase 2 (mtcA2) from Mycobacterium tuberculosis (strain CDC 1551 / Oshkosh).